A 166-amino-acid polypeptide reads, in one-letter code: Small ribosomal subunit protein uS5 (166 aa).

Positions 12–75 (YIEKLVQVNR…EAARRNMIQV (64 aa)) constitute an S5 DRBM domain.

This sequence belongs to the universal ribosomal protein uS5 family. In terms of assembly, part of the 30S ribosomal subunit. Contacts proteins S4 and S8.

Its function is as follows. With S4 and S12 plays an important role in translational accuracy. Functionally, located at the back of the 30S subunit body where it stabilizes the conformation of the head with respect to the body. This Pseudomonas savastanoi pv. phaseolicola (strain 1448A / Race 6) (Pseudomonas syringae pv. phaseolicola (strain 1448A / Race 6)) protein is Small ribosomal subunit protein uS5.